The primary structure comprises 186 residues: Holliday junction branch migration complex subunit RuvA (186 aa).

The domain I stretch occupies residues 1–61 (MYSYIKGKVV…ENLQILYGFN (61 aa)). Positions 62-134 (DNKNLLFFKK…LKGDLIFSEK (73 aa)) are domain II. A flexible linker region spans residues 134-135 (KI). Residues 136–186 (ILNPKKTELEKILLNLGFVKKEIKSVLNQIDDKKELELMLKEVLLKLAKNI) form a domain III region.

Belongs to the RuvA family. In terms of assembly, homotetramer. Forms an RuvA(8)-RuvB(12)-Holliday junction (HJ) complex. HJ DNA is sandwiched between 2 RuvA tetramers; dsDNA enters through RuvA and exits via RuvB. An RuvB hexamer assembles on each DNA strand where it exits the tetramer. Each RuvB hexamer is contacted by two RuvA subunits (via domain III) on 2 adjacent RuvB subunits; this complex drives branch migration. In the full resolvosome a probable DNA-RuvA(4)-RuvB(12)-RuvC(2) complex forms which resolves the HJ.

The protein localises to the cytoplasm. Its function is as follows. The RuvA-RuvB-RuvC complex processes Holliday junction (HJ) DNA during genetic recombination and DNA repair, while the RuvA-RuvB complex plays an important role in the rescue of blocked DNA replication forks via replication fork reversal (RFR). RuvA specifically binds to HJ cruciform DNA, conferring on it an open structure. The RuvB hexamer acts as an ATP-dependent pump, pulling dsDNA into and through the RuvAB complex. HJ branch migration allows RuvC to scan DNA until it finds its consensus sequence, where it cleaves and resolves the cruciform DNA. In Phytoplasma mali (strain AT), this protein is Holliday junction branch migration complex subunit RuvA.